The sequence spans 366 residues: Cobalt-precorrin-5B C(1)-methyltransferase (366 aa).

Belongs to the CbiD family.

The enzyme catalyses Co-precorrin-5B + S-adenosyl-L-methionine = Co-precorrin-6A + S-adenosyl-L-homocysteine. Its pathway is cofactor biosynthesis; adenosylcobalamin biosynthesis; cob(II)yrinate a,c-diamide from sirohydrochlorin (anaerobic route): step 6/10. Catalyzes the methylation of C-1 in cobalt-precorrin-5B to form cobalt-precorrin-6A. This chain is Cobalt-precorrin-5B C(1)-methyltransferase, found in Thermoanaerobacter sp. (strain X514).